The primary structure comprises 118 residues: Ribonuclease P protein component (118 aa).

Belongs to the RnpA family. Consists of a catalytic RNA component (M1 or rnpB) and a protein subunit.

It catalyses the reaction Endonucleolytic cleavage of RNA, removing 5'-extranucleotides from tRNA precursor.. RNaseP catalyzes the removal of the 5'-leader sequence from pre-tRNA to produce the mature 5'-terminus. It can also cleave other RNA substrates such as 4.5S RNA. The protein component plays an auxiliary but essential role in vivo by binding to the 5'-leader sequence and broadening the substrate specificity of the ribozyme. In Rickettsia peacockii (strain Rustic), this protein is Ribonuclease P protein component.